The following is a 356-amino-acid chain: Alanine racemase, catabolic (356 aa).

Lys35 functions as the Proton acceptor; specific for D-alanine in the catalytic mechanism. Residue Lys35 is modified to N6-(pyridoxal phosphate)lysine. Residue Arg130 participates in substrate binding. Tyr253 (proton acceptor; specific for L-alanine) is an active-site residue. Met301 provides a ligand contact to substrate.

This sequence belongs to the alanine racemase family. The cofactor is pyridoxal 5'-phosphate.

The catalysed reaction is L-alanine = D-alanine. Its function is as follows. Isomerizes L-alanine to D-alanine which is then oxidized to pyruvate by DadA. In Klebsiella aerogenes (Enterobacter aerogenes), this protein is Alanine racemase, catabolic (dadB).